Reading from the N-terminus, the 185-residue chain is dCTP deaminase (185 aa).

DCTP-binding positions include 107–112, 131–133, glutamine 152, tyrosine 166, and glutamine 176; these read KSTYAR and TLE. Glutamate 133 functions as the Proton donor/acceptor in the catalytic mechanism.

It belongs to the dCTP deaminase family. In terms of assembly, homotrimer.

The enzyme catalyses dCTP + H2O + H(+) = dUTP + NH4(+). The protein operates within pyrimidine metabolism; dUMP biosynthesis; dUMP from dCTP (dUTP route): step 1/2. In terms of biological role, catalyzes the deamination of dCTP to dUTP. The sequence is that of dCTP deaminase from Anaplasma marginale (strain Florida).